A 344-amino-acid polypeptide reads, in one-letter code: Fructose-1,6-bisphosphatase class 1 (344 aa).

Mg(2+) is bound by residues Glu-90, Asp-109, Leu-111, and Asp-112. Substrate-binding positions include 112-115 (DGSS) and Asn-200. Residue Glu-271 coordinates Mg(2+).

This sequence belongs to the FBPase class 1 family. As to quaternary structure, homotetramer. Requires Mg(2+) as cofactor.

It is found in the cytoplasm. The catalysed reaction is beta-D-fructose 1,6-bisphosphate + H2O = beta-D-fructose 6-phosphate + phosphate. Its pathway is carbohydrate biosynthesis; gluconeogenesis. The chain is Fructose-1,6-bisphosphatase class 1 from Nitrobacter vulgaris.